Here is a 120-residue protein sequence, read N- to C-terminus: Large ribosomal subunit protein bL19 (120 aa).

It belongs to the bacterial ribosomal protein bL19 family.

This protein is located at the 30S-50S ribosomal subunit interface and may play a role in the structure and function of the aminoacyl-tRNA binding site. This Renibacterium salmoninarum (strain ATCC 33209 / DSM 20767 / JCM 11484 / NBRC 15589 / NCIMB 2235) protein is Large ribosomal subunit protein bL19.